The primary structure comprises 430 residues: Probable WRKY transcription factor 14 (430 aa).

Positions 211–277 form a DNA-binding region, WRKY; sequence SGEVVPSDLW…YTSEHNHPWP (67 aa). Residues 283–366 form a disordered region; it reads LAGSTRSSTS…APYRPELHDH (84 aa). A compositionally biased stretch (low complexity) spans 286–306; it reads STRSSTSSSSNPNPSKPSTAN. A compositionally biased stretch (polar residues) spans 307-319; it reads VNSSSIGSQNTIY. The span at 340–354 shows a compositional bias: acidic residues; it reads GDDMELENVDDDDDN.

The protein belongs to the WRKY group II-e family.

The protein resides in the nucleus. Functionally, transcription factor. Interacts specifically with the W box (5'-(T)TGAC[CT]-3'), a frequently occurring elicitor-responsive cis-acting element. In Arabidopsis thaliana (Mouse-ear cress), this protein is Probable WRKY transcription factor 14 (WRKY14).